Consider the following 457-residue polypeptide: Argininosuccinate lyase (457 aa).

The protein belongs to the lyase 1 family. Argininosuccinate lyase subfamily.

It is found in the cytoplasm. The catalysed reaction is 2-(N(omega)-L-arginino)succinate = fumarate + L-arginine. It functions in the pathway amino-acid biosynthesis; L-arginine biosynthesis; L-arginine from L-ornithine and carbamoyl phosphate: step 3/3. The sequence is that of Argininosuccinate lyase from Psychrobacter arcticus (strain DSM 17307 / VKM B-2377 / 273-4).